We begin with the raw amino-acid sequence, 382 residues long: S-adenosylmethionine decarboxylase proenzyme (382 aa).

Phenylalanine 32 lines the substrate pocket. Catalysis depends on residues glutamate 33 and glutamate 36. Leucine 87 serves as a coordination point for substrate. The Schiff-base intermediate with substrate; via pyruvic acid role is filled by serine 90. Serine 90 bears the Pyruvic acid (Ser); by autocatalysis mark. Residue cysteine 104 is the Proton donor; for catalytic activity of the active site. Phenylalanine 248 serves as a coordination point for substrate. Catalysis depends on proton acceptor; for processing activity residues serine 254 and histidine 267. Position 271 (glutamate 271) interacts with substrate.

The protein belongs to the eukaryotic AdoMetDC family. In terms of assembly, heterotetramer of two alpha and two beta chains. Pyruvate is required as a cofactor. Post-translationally, is synthesized initially as an inactive proenzyme. Formation of the active enzyme involves a self-maturation process in which the active site pyruvoyl group is generated from an internal serine residue via an autocatalytic post-translational modification. Two non-identical subunits are generated from the proenzyme in this reaction, and the pyruvate is formed at the N-terminus of the alpha chain, which is derived from the carboxyl end of the proenzyme. The post-translation cleavage follows an unusual pathway, termed non-hydrolytic serinolysis, in which the side chain hydroxyl group of the serine supplies its oxygen atom to form the C-terminus of the beta chain, while the remainder of the serine residue undergoes an oxidative deamination to produce ammonia and the pyruvoyl group blocking the N-terminus of the alpha chain.

It catalyses the reaction S-adenosyl-L-methionine + H(+) = S-adenosyl 3-(methylsulfanyl)propylamine + CO2. It functions in the pathway amine and polyamine biosynthesis; S-adenosylmethioninamine biosynthesis; S-adenosylmethioninamine from S-adenosyl-L-methionine: step 1/1. This is S-adenosylmethionine decarboxylase proenzyme from Leishmania donovani.